A 202-amino-acid chain; its full sequence is Venom allergen 5.02 (202 aa).

4 disulfide bridges follow: cysteine 4–cysteine 16, cysteine 8–cysteine 101, cysteine 26–cysteine 94, and cysteine 168–cysteine 185. The 142-residue stretch at 46-187 (KQHNEFRQKV…WHRHYLVCNY (142 aa)) folds into the SCP domain.

This sequence belongs to the CRISP family. Venom allergen 5-like subfamily. In terms of tissue distribution, expressed by the venom gland.

It is found in the secreted. In Vespa crabro (European hornet), this protein is Venom allergen 5.02.